Reading from the N-terminus, the 357-residue chain is Protein RecA (357 aa).

Position 67–74 (67–74 (GPESSGKT)) interacts with ATP.

The protein belongs to the RecA family.

The protein localises to the cytoplasm. Functionally, can catalyze the hydrolysis of ATP in the presence of single-stranded DNA, the ATP-dependent uptake of single-stranded DNA by duplex DNA, and the ATP-dependent hybridization of homologous single-stranded DNAs. It interacts with LexA causing its activation and leading to its autocatalytic cleavage. This is Protein RecA from Leifsonia xyli subsp. xyli (strain CTCB07).